Reading from the N-terminus, the 154-residue chain is UPF0178 protein ABC1688 (154 aa).

Belongs to the UPF0178 family.

This is UPF0178 protein ABC1688 from Shouchella clausii (strain KSM-K16) (Alkalihalobacillus clausii).